Consider the following 285-residue polypeptide: NAD kinase (285 aa).

Catalysis depends on Asp68, which acts as the Proton acceptor. NAD(+) contacts are provided by residues 68–69 (DG), 142–143 (ND), Arg153, Lys170, Asp172, 183–188 (TAYNLS), and Gln242.

This sequence belongs to the NAD kinase family. A divalent metal cation serves as cofactor.

It localises to the cytoplasm. The enzyme catalyses NAD(+) + ATP = ADP + NADP(+) + H(+). In terms of biological role, involved in the regulation of the intracellular balance of NAD and NADP, and is a key enzyme in the biosynthesis of NADP. Catalyzes specifically the phosphorylation on 2'-hydroxyl of the adenosine moiety of NAD to yield NADP. This Syntrophotalea carbinolica (strain DSM 2380 / NBRC 103641 / GraBd1) (Pelobacter carbinolicus) protein is NAD kinase.